A 650-amino-acid polypeptide reads, in one-letter code: MSRQNLVALTVTTLLGVAMGGFVLWKGIQRRWSKTSRVMQQQPQQPQQPQQPQPQPQPQPQPQPEHPQPQQQVPGGREWPPPEDDQLPFGALRAPRASWEERILQAEVVTVSQEAEWNQIQPFLKRELEDFPVLGIDCEWVNLEGKASPLSLLQMASPSGFCALVRLPRLIYGGRTLPRTLLDILADGAILKVGVGCSEDANKLLQDYGLIVRGCLDLRYLAMKQGNNILCNGLSLKSLAETILNFPLDKSLLLRCSNWDAENLTEDQVTYAARDAQISVALFLHLLGYPFSRDSYEEESTDQINWQKALERCRNMVDIPFRSKGLGRLVEEVNGEALESQLKPRNRKAKTDRMVPGNNQGRDPRKHKRKPLGVGYSARKSPLYDNCFLQAPDGQPLCTCDRRKAQWYLDKGIGELVSKEPFVVRLQFEPAGRPESPGDYYLMVKENLCVVCGKTDTYIRKNIIPHEYRKHFPIEMKDHNSHDVLLLCTSCHAISNYYDNHLKQQLAKEFQAPIGSEEGLRLLEDLERRQVRSGARALLNAESLPAHRKEELLHALREFYNTDIITEEMLHEAASLETRIYNESYIPHGLKVVQRHTEGGLRSLMQLESRWRQHFLDSMQPKHLPQQWSVDHNHQKLLRKYGDDLPIKLS.

Residues 1 to 6 lie on the Mitochondrial intermembrane side of the membrane; it reads MSRQNL. The helical transmembrane segment at 7–29 threads the bilayer; sequence VALTVTTLLGVAMGGFVLWKGIQ. Residues 30–650 are Cytoplasmic-facing; that stretch reads RRWSKTSRVM…YGDDLPIKLS (621 aa). The interval 34–89 is disordered; the sequence is KTSRVMQQQPQQPQQPQQPQPQPQPQPQPQPEHPQPQQQVPGGREWPPPEDDQLPF. The segment covering 49–67 has biased composition (pro residues); the sequence is PQQPQPQPQPQPQPQPEHP. A divalent metal cation is bound by residues aspartate 137, glutamate 139, and aspartate 275. In terms of domain architecture, 3'-5' exonuclease spans 184 to 276; sequence ILADGAILKV…DQVTYAARDA (93 aa). The segment at 340 to 373 is disordered; sequence SQLKPRNRKAKTDRMVPGNNQGRDPRKHKRKPLG.

Belongs to the EXD2 family. As to quaternary structure, homodimer. Interacts with RBBP8, MRE11 and BRCA1. Requires Mg(2+) as cofactor. The cofactor is Mn(2+).

Its subcellular location is the mitochondrion outer membrane. The protein resides in the mitochondrion matrix. The protein localises to the nucleus. It localises to the chromosome. It catalyses the reaction Exonucleolytic cleavage in the 3'- to 5'-direction to yield nucleoside 5'-phosphates.. Exonuclease that has both 3'-5' exoribonuclease and exodeoxyribonuclease activities, depending on the divalent metal cation used as cofactor. In presence of Mg(2+), only shows 3'-5' exoribonuclease activity, while it shows both exoribonuclease and exodeoxyribonuclease activities in presence of Mn(2+). Acts as an exoribonuclease in mitochondrion, possibly by regulating ATP production and mitochondrial translation. Also involved in the response to DNA damage. Acts as 3'-5' exodeoxyribonuclease for double-strand breaks resection and efficient homologous recombination. Plays a key role in controlling the initial steps of chromosomal break repair, it is recruited to chromatin in a damage-dependent manner and functionally interacts with the MRN complex to accelerate resection through its 3'-5' exonuclease activity, which efficiently processes double-stranded DNA substrates containing nicks. Also involved in response to replicative stress: recruited to stalled forks and is required to stabilize and restart stalled replication forks by restraining excessive fork regression, thereby suppressing their degradation. The sequence is that of Exonuclease 3'-5' domain-containing protein 2 from Mus musculus (Mouse).